The following is a 270-amino-acid chain: NAD kinase (270 aa).

The active-site Proton acceptor is the D49. NAD(+)-binding positions include 49–50, R54, 126–127, R152, D154, 165–170, A189, and Q227; these read DG, NE, and TAYNKS.

The protein belongs to the NAD kinase family. A divalent metal cation serves as cofactor.

It localises to the cytoplasm. It carries out the reaction NAD(+) + ATP = ADP + NADP(+) + H(+). Involved in the regulation of the intracellular balance of NAD and NADP, and is a key enzyme in the biosynthesis of NADP. Catalyzes specifically the phosphorylation on 2'-hydroxyl of the adenosine moiety of NAD to yield NADP. The chain is NAD kinase from Lactococcus lactis subsp. cremoris (strain SK11).